We begin with the raw amino-acid sequence, 277 residues long: Proteasome subunit beta type-7 (277 aa).

Positions 1–43 are cleaved as a propeptide — removed in mature form; that stretch reads MAAVSVYERPVGGFSFDNCRRNAVLEADFAKKGYKLPTARKTG. Threonine 44 functions as the Nucleophile in the catalytic mechanism.

It belongs to the peptidase T1B family. The 26S proteasome consists of a 20S proteasome core and two 19S regulatory subunits. The 20S proteasome core is a barrel-shaped complex made of 28 subunits that are arranged in four stacked rings. The two outer rings are each formed by seven alpha subunits, and the two inner rings are formed by seven beta subunits. The proteolytic activity is exerted by three beta-subunits PSMB5, PSMB6 and PSMB7.

The protein localises to the cytoplasm. It is found in the nucleus. It catalyses the reaction Cleavage of peptide bonds with very broad specificity.. Component of the 20S core proteasome complex involved in the proteolytic degradation of most intracellular proteins. This complex plays numerous essential roles within the cell by associating with different regulatory particles. Associated with two 19S regulatory particles, forms the 26S proteasome and thus participates in the ATP-dependent degradation of ubiquitinated proteins. The 26S proteasome plays a key role in the maintenance of protein homeostasis by removing misfolded or damaged proteins that could impair cellular functions, and by removing proteins whose functions are no longer required. Associated with the PA200 or PA28, the 20S proteasome mediates ubiquitin-independent protein degradation. This type of proteolysis is required in several pathways including spermatogenesis (20S-PA200 complex) or generation of a subset of MHC class I-presented antigenic peptides (20S-PA28 complex). Within the 20S core complex, PSMB7 displays a trypsin-like activity. This chain is Proteasome subunit beta type-7 (PSMB7), found in Bos taurus (Bovine).